The following is a 167-amino-acid chain: Homing endonuclease I-ApeII (167 aa).

This sequence belongs to the LAGLIDADG endonuclease family.

Its function is as follows. Endonuclease involved in rRNA intron I-gamma homing. This is Homing endonuclease I-ApeII (apeII) from Aeropyrum pernix (strain ATCC 700893 / DSM 11879 / JCM 9820 / NBRC 100138 / K1).